A 338-amino-acid chain; its full sequence is Homoserine kinase (338 aa).

Belongs to the GHMP kinase family. Homoserine kinase subfamily.

It carries out the reaction L-homoserine + ATP = O-phospho-L-homoserine + ADP + H(+). It functions in the pathway amino-acid biosynthesis; L-threonine biosynthesis; L-threonine from L-aspartate: step 4/5. Commits homoserine to the threonine biosynthesis pathway by catalyzing its O-phosphorylation. This Schizosaccharomyces pombe (strain 972 / ATCC 24843) (Fission yeast) protein is Homoserine kinase.